The following is a 243-amino-acid chain: Probable 2-phosphosulfolactate phosphatase (243 aa).

It belongs to the ComB family. The cofactor is Mg(2+).

It catalyses the reaction (2R)-O-phospho-3-sulfolactate + H2O = (2R)-3-sulfolactate + phosphate. This Prochlorococcus marinus (strain MIT 9313) protein is Probable 2-phosphosulfolactate phosphatase.